The primary structure comprises 157 residues: Large ribosomal subunit protein uL3 (157 aa).

The segment at 57 to 98 (GKGFAGSIKRHNQSRGPESHGSRYHRRPGSMGPIKGKLKGKK) is disordered.

The protein belongs to the universal ribosomal protein uL3 family. In terms of assembly, part of the 50S ribosomal subunit. Forms a cluster with proteins L14 and L19.

In terms of biological role, one of the primary rRNA binding proteins, it binds directly near the 3'-end of the 23S rRNA, where it nucleates assembly of the 50S subunit. The polypeptide is Large ribosomal subunit protein uL3 (rplC) (Onion yellows phytoplasma (strain OY-M)).